The following is a 158-amino-acid chain: MRSDLTAFLMMQYKNNQSVLVVIYTKDTNRVLMLQRQDDPDFWQSVTGTIESDETPKKTAIRELWEEVRLDISENSTALFDCNESIEFEIFPHFRYKYAPNITHCKEHWFLCEVEKEFIPVLSEHLDFCWVSAKKAVEMTKSQNNAEAIKKYLFNLRR.

Substrate contacts are provided by K14, R36, and T47. The region spanning 14-153 (KNNQSVLVVI…NNAEAIKKYL (140 aa)) is the Nudix hydrolase domain. The Nudix box signature appears at 48–69 (GTIESDETPKKTAIRELWEEVR). Mg(2+) is bound by residues E63 and E67. 88–91 (FEIF) serves as a coordination point for substrate. A Mg(2+)-binding site is contributed by E124. S142 contributes to the substrate binding site.

This sequence belongs to the Nudix hydrolase family. Requires Mg(2+) as cofactor.

The enzyme catalyses 7,8-dihydroneopterin 3'-triphosphate + H2O = 7,8-dihydroneopterin 3'-phosphate + diphosphate + H(+). Functionally, catalyzes the hydrolysis of dihydroneopterin triphosphate to dihydroneopterin monophosphate and pyrophosphate. Required for efficient folate biosynthesis. Can also hydrolyze nucleoside triphosphates with a preference for dATP. The sequence is that of Dihydroneopterin triphosphate diphosphatase (nudB) from Haemophilus influenzae (strain ATCC 51907 / DSM 11121 / KW20 / Rd).